Consider the following 84-residue polypeptide: Neurotoxin BM10-1-like (84 aa).

A signal peptide spans 1–21 (MKTLLLTLVVVTIVCLDLGYT). Intrachain disulfides connect Cys-24-Cys-47, Cys-27-Cys-32, Cys-40-Cys-64, Cys-68-Cys-76, and Cys-77-Cys-82.

This sequence belongs to the three-finger toxin family. Ancestral subfamily. Orphan group IV sub-subfamily. Expressed by the venom gland.

The protein localises to the secreted. In terms of biological role, binds and inhibits muscular and neuronal nicotinic acetylcholine receptors (nAChR). This is Neurotoxin BM10-1-like from Bungarus multicinctus (Many-banded krait).